The primary structure comprises 228 residues: Cytidylate kinase (228 aa).

An ATP-binding site is contributed by 17–25 (GPTASGKGT).

This sequence belongs to the cytidylate kinase family. Type 1 subfamily.

It localises to the cytoplasm. It catalyses the reaction CMP + ATP = CDP + ADP. It carries out the reaction dCMP + ATP = dCDP + ADP. This chain is Cytidylate kinase, found in Paraburkholderia phymatum (strain DSM 17167 / CIP 108236 / LMG 21445 / STM815) (Burkholderia phymatum).